A 233-amino-acid chain; its full sequence is Histidinol dehydrogenase (233 aa).

Substrate is bound by residues Ser-31, Gln-53, and His-56. 2 residues coordinate Zn(2+): Gln-53 and His-56. Active-site proton acceptor residues include Glu-121 and His-122. Residues His-122, Asp-155, Glu-209, and His-214 each coordinate substrate. Asp-155 serves as a coordination point for Zn(2+). His-214 serves as a coordination point for Zn(2+).

This sequence belongs to the histidinol dehydrogenase family. It depends on Zn(2+) as a cofactor.

It carries out the reaction L-histidinol + 2 NAD(+) + H2O = L-histidine + 2 NADH + 3 H(+). It participates in amino-acid biosynthesis; L-histidine biosynthesis; L-histidine from 5-phospho-alpha-D-ribose 1-diphosphate: step 9/9. Catalyzes the sequential NAD-dependent oxidations of L-histidinol to L-histidinaldehyde and then to L-histidine. The sequence is that of Histidinol dehydrogenase (hisD) from Thiocapsa roseopersicina.